We begin with the raw amino-acid sequence, 297 residues long: Acetyl-coenzyme A carboxylase carboxyl transferase subunit beta (297 aa).

In terms of domain architecture, CoA carboxyltransferase N-terminal spans 27-296 (LWHKCPSCEA…PVETSQVTAK (270 aa)). Zn(2+)-binding residues include C31, C34, C50, and C53. Residues 31 to 53 (CPSCEAVLYRPELEKTLDVCPKC) form a C4-type zinc finger.

This sequence belongs to the AccD/PCCB family. As to quaternary structure, acetyl-CoA carboxylase is a heterohexamer composed of biotin carboxyl carrier protein (AccB), biotin carboxylase (AccC) and two subunits each of ACCase subunit alpha (AccA) and ACCase subunit beta (AccD). The cofactor is Zn(2+).

It localises to the cytoplasm. The enzyme catalyses N(6)-carboxybiotinyl-L-lysyl-[protein] + acetyl-CoA = N(6)-biotinyl-L-lysyl-[protein] + malonyl-CoA. The protein operates within lipid metabolism; malonyl-CoA biosynthesis; malonyl-CoA from acetyl-CoA: step 1/1. Component of the acetyl coenzyme A carboxylase (ACC) complex. Biotin carboxylase (BC) catalyzes the carboxylation of biotin on its carrier protein (BCCP) and then the CO(2) group is transferred by the transcarboxylase to acetyl-CoA to form malonyl-CoA. This chain is Acetyl-coenzyme A carboxylase carboxyl transferase subunit beta, found in Stutzerimonas stutzeri (strain A1501) (Pseudomonas stutzeri).